A 379-amino-acid polypeptide reads, in one-letter code: Glucose-insensitive transcription protein 7 (379 aa).

Residues 181-272 (SNRIRYDWSQ…VSEIKWEALV (92 aa)) form the CS domain. The SGS domain maps to 292-379 (ASGNTKNKAK…PPQGMEPKKF (88 aa)). Positions 345-379 (SYTESNGTALSTNWKDVKSKTFETKPPQGMEPKKF) are disordered. Over residues 346 to 358 (YTESNGTALSTNW) the composition is skewed to polar residues.

Involved in cyclic AMP (cAMP) pathway, possibly by participating in the assembly or the conformational activation of specific multiprotein complexes. The polypeptide is Glucose-insensitive transcription protein 7 (git7) (Schizosaccharomyces pombe (strain 972 / ATCC 24843) (Fission yeast)).